Reading from the N-terminus, the 592-residue chain is Beta-xylosidase (592 aa).

Residues 1 to 19 form the signal peptide; sequence MYLNACRALTLISVLSLLA. The N-palmitoyl cysteine moiety is linked to residue Cys-20. Cys-20 carries S-diacylglycerol cysteine lipidation.

The protein belongs to the glycosyl hydrolase 43 family.

Its subcellular location is the cell outer membrane. Functionally, xylosidase involved in ulvan degradation. Ulvan is the main polysaccharide component of the Ulvales (green seaweed) cell wall. It is composed of disaccharide building blocks comprising 3-sulfated rhamnose (Rha3S) linked to D-glucuronic acid (GlcA), L-iduronic acid (IduA), or D-xylose (Xyl). Beta-xylosidase converts Xyl-Rha3S, a product of alpha-L-rhamnosidase acting on Rha-Xyl-Rha3S oligosaccharides, further to Xyl and Rha3S. The polypeptide is Beta-xylosidase (Formosa agariphila (strain DSM 15362 / KCTC 12365 / LMG 23005 / KMM 3901 / M-2Alg 35-1)).